We begin with the raw amino-acid sequence, 534 residues long: High-affinity nicotinic acid transporter (534 aa).

Topologically, residues 1–130 (MSNKFTMESP…DIHLVGTQYN (130 aa)) are extracellular. The disordered stretch occupies residues 21 to 56 (SPTNDGSEEKPTEVTFQEDEGHDASLHNRSHDKKSE). Ser-27 bears the Phosphoserine mark. Residues 131–151 (TCVTVFFATYVLFDPIGTNLL) form a helical membrane-spanning segment. A topological domain (cytoplasmic) is located at residue Lys-152. The helical transmembrane segment at 153 to 173 (IMGPPLMMSICLTCFGAISLG) threads the bilayer. At 174–187 (TAWVKNYAQLIVVR) the chain is on the extracellular side. A helical transmembrane segment spans residues 188–208 (LLLGAFEGMIYPAINMYLSVC). Residues 209-217 (YRREQYALR) lie on the Cytoplasmic side of the membrane. Residues 218–238 (FAFVFSAACLSSSFGGLIAYG) traverse the membrane as a helical segment. The Extracellular portion of the chain corresponds to 239–250 (CSKISGSLKDWQ). A helical membrane pass occupies residues 251 to 271 (YIYIVEGCISLGFVPFYAFGL). Over 272–323 (SKNLEDSWFFNKEEKEYISERYKTMNTFDPDEKFEWFQVWQAVKDVKTWASA) the chain is Cytoplasmic. Residue Lys-283 forms a Glycyl lysine isopeptide (Lys-Gly) (interchain with G-Cter in ubiquitin) linkage. A helical membrane pass occupies residues 324-344 (VALFGIDLTTFGLTVFLPIII). Topologically, residues 345–355 (TSMGFTNVRAQ) are extracellular. A helical membrane pass occupies residues 356 to 376 (LMTVPIYFLTAIVFFICAVWS). The Cytoplasmic portion of the chain corresponds to 377-384 (DRIKLRSP). A helical membrane pass occupies residues 385–405 (FILGACLTTSIGIAIVLGSQV). At 406–410 (HGVRY) the chain is on the extracellular side. Residues 411–431 (FGVYILCMGIYVNAACNCLWL) form a helical membrane-spanning segment. Residues 432–444 (SGNTGNYFKRATA) are Cytoplasmic-facing. The helical transmembrane segment at 445–465 (LGINLFFGSGSGLVSGQIFVA) threads the bilayer. Residues 466–474 (KDKPRYIKG) are Extracellular-facing. Residues 475-495 (LSISLAFQVFSIFMTVVQIFL) form a helical membrane-spanning segment. Over 496–534 (YKRENDKKKAIIDRCNELGEPIPYDERLSDKNPEFKYMY) the chain is Cytoplasmic.

The protein belongs to the major facilitator superfamily. Allantoate permease family.

The protein localises to the membrane. In terms of biological role, involved in the uptake of nicotinic acid. This is High-affinity nicotinic acid transporter (TNA1) from Saccharomyces cerevisiae (strain ATCC 204508 / S288c) (Baker's yeast).